A 695-amino-acid polypeptide reads, in one-letter code: NADPH--cytochrome P450 reductase (695 aa).

The Lumenal segment spans residues 1-8; it reads MAQLDTLD. A helical transmembrane segment spans residues 9-31; the sequence is IVVLVVLLVGSVAYFTKGSYWAV. The Cytoplasmic portion of the chain corresponds to 32 to 695; the sequence is PKDPYAAANS…SGSYQEDVWS (664 aa). In terms of domain architecture, Flavodoxin-like spans 66–221; the sequence is CVIFYGSQTG…DFLAWKEPMW (156 aa). FMN is bound by residues 72 to 77, 123 to 126, 169 to 178, and Asp204; these read SQTGTA, ATYG, and LGNNTYEHYN. An FAD-binding FR-type domain is found at 277-538; that stretch reads HNPYIAPIVE…HVRHSNFKLP (262 aa). Arg296 provides a ligand contact to NADP(+). FAD-binding positions include 451–454, 469–471, and 486–489; these read RYYS, TAV, and GVTT. NADP(+) contacts are provided by residues Thr552, 614-615, 620-624, and Glu656; these read SR and KVYVQ. Residue Trp694 coordinates FAD.

The protein belongs to the NADPH--cytochrome P450 reductase family. This sequence in the N-terminal section; belongs to the flavodoxin family. It in the C-terminal section; belongs to the flavoprotein pyridine nucleotide cytochrome reductase family. FAD is required as a cofactor. Requires FMN as cofactor.

Its subcellular location is the endoplasmic reticulum membrane. It is found in the mitochondrion outer membrane. The protein resides in the cell membrane. It carries out the reaction 2 oxidized [cytochrome P450] + NADPH = 2 reduced [cytochrome P450] + NADP(+) + H(+). Its function is as follows. This enzyme is required for electron transfer from NADP to cytochrome P450 in microsomes. It can also provide electron transfer to heme oxygenase and cytochrome B5. Involved in ergosterol biosynthesis. The protein is NADPH--cytochrome P450 reductase of Aspergillus fumigatus (strain ATCC MYA-4609 / CBS 101355 / FGSC A1100 / Af293) (Neosartorya fumigata).